Reading from the N-terminus, the 326-residue chain is Glutaminase 2 (326 aa).

Positions 73, 125, 169, 176, 200, 252, and 270 each coordinate substrate.

It belongs to the glutaminase family. In terms of assembly, homotetramer.

It catalyses the reaction L-glutamine + H2O = L-glutamate + NH4(+). The sequence is that of Glutaminase 2 from Bacillus anthracis.